A 217-amino-acid polypeptide reads, in one-letter code: Probable transaldolase (217 aa).

Lys-83 acts as the Schiff-base intermediate with substrate in catalysis.

This sequence belongs to the transaldolase family. Type 3B subfamily.

It localises to the cytoplasm. It catalyses the reaction D-sedoheptulose 7-phosphate + D-glyceraldehyde 3-phosphate = D-erythrose 4-phosphate + beta-D-fructose 6-phosphate. Its pathway is carbohydrate degradation; pentose phosphate pathway; D-glyceraldehyde 3-phosphate and beta-D-fructose 6-phosphate from D-ribose 5-phosphate and D-xylulose 5-phosphate (non-oxidative stage): step 2/3. Its function is as follows. Transaldolase is important for the balance of metabolites in the pentose-phosphate pathway. The sequence is that of Probable transaldolase from Brucella melitensis biotype 1 (strain ATCC 23456 / CCUG 17765 / NCTC 10094 / 16M).